A 197-amino-acid chain; its full sequence is Putative carbonic anhydrase YvdA (197 aa).

Positions 41, 43, 99, and 102 each coordinate Zn(2+).

It belongs to the beta-class carbonic anhydrase family. It depends on Zn(2+) as a cofactor.

It carries out the reaction hydrogencarbonate + H(+) = CO2 + H2O. Its function is as follows. Reversible hydration of carbon dioxide. In Bacillus subtilis (strain 168), this protein is Putative carbonic anhydrase YvdA (yvdA).